A 695-amino-acid polypeptide reads, in one-letter code: Threonine--tRNA ligase (695 aa).

The TGS domain occupies Ser6–Pro75. The segment at Asp274–Pro580 is catalytic. Zn(2+) contacts are provided by Cys379, His430, and His557.

Belongs to the class-II aminoacyl-tRNA synthetase family. Homodimer. It depends on Zn(2+) as a cofactor.

The protein localises to the cytoplasm. The catalysed reaction is tRNA(Thr) + L-threonine + ATP = L-threonyl-tRNA(Thr) + AMP + diphosphate + H(+). In terms of biological role, catalyzes the attachment of threonine to tRNA(Thr) in a two-step reaction: L-threonine is first activated by ATP to form Thr-AMP and then transferred to the acceptor end of tRNA(Thr). Also edits incorrectly charged L-seryl-tRNA(Thr). The polypeptide is Threonine--tRNA ligase (Corynebacterium glutamicum (strain ATCC 13032 / DSM 20300 / JCM 1318 / BCRC 11384 / CCUG 27702 / LMG 3730 / NBRC 12168 / NCIMB 10025 / NRRL B-2784 / 534)).